The chain runs to 209 residues: Small ribosomal subunit protein uS4 (209 aa).

The S4 RNA-binding domain occupies 99–161 (CRLDNIAFRL…SSKLVVVEMG (63 aa)).

The protein belongs to the universal ribosomal protein uS4 family. As to quaternary structure, part of the 30S ribosomal subunit. Contacts protein S5. The interaction surface between S4 and S5 is involved in control of translational fidelity.

Its function is as follows. One of the primary rRNA binding proteins, it binds directly to 16S rRNA where it nucleates assembly of the body of the 30S subunit. In terms of biological role, with S5 and S12 plays an important role in translational accuracy. The protein is Small ribosomal subunit protein uS4 of Acidobacterium capsulatum (strain ATCC 51196 / DSM 11244 / BCRC 80197 / JCM 7670 / NBRC 15755 / NCIMB 13165 / 161).